A 298-amino-acid polypeptide reads, in one-letter code: GTPase Era (298 aa).

The region spanning 8–176 is the Era-type G domain; it reads HCGSVAVIGR…VRDVLALLPE (169 aa). The interval 16-23 is G1; that stretch reads GRPNVGKS. 16–23 lines the GTP pocket; sequence GRPNVGKS. The segment at 42 to 46 is G2; that stretch reads QTTRH. The tract at residues 63–66 is G3; the sequence is DTPG. Residues 63–67 and 125–128 each bind GTP; these read DTPGL and NKID. Positions 125 to 128 are G4; sequence NKID. The G5 stretch occupies residues 155–157; that stretch reads ISA. In terms of domain architecture, KH type-2 spans 199–283; the sequence is VREQLMRQLG…FLETWVRVRE (85 aa).

Belongs to the TRAFAC class TrmE-Era-EngA-EngB-Septin-like GTPase superfamily. Era GTPase family. In terms of assembly, monomer.

It localises to the cytoplasm. The protein localises to the cell inner membrane. An essential GTPase that binds both GDP and GTP, with rapid nucleotide exchange. Plays a role in 16S rRNA processing and 30S ribosomal subunit biogenesis and possibly also in cell cycle regulation and energy metabolism. The polypeptide is GTPase Era (Stenotrophomonas maltophilia (strain R551-3)).